Reading from the N-terminus, the 337-residue chain is MDIDVLNMFLVAGGTLLVPLLAFMTSFLLWPAALIRIYYWYWRRALGMQVKYSSYGNYKFCYTARGKPGNKPSVLMLHGFSAHKDMWLGMVKFLPKNLHLVCVDMPGHEGTSRSALDYYSICGQVKRIHQFVESIGLNKKPFHLVGTSMGGNVAGVYAAQHPTHISSLTLICPAGLMYPIESKFLKQLKVLEKSGDNQRIPLIPSTAGEMEDMLRLCSFVRFKIPQQVLQGLIDERIPHNEFYRKLFLALVDEKSRHSLHENMNKIMAPTQIIWGKQDQVLDVSGAEVLAGSLRGCQVEILENCGHSVVMERPRKSAKLMTDFLSSLQSTDNHKKHD.

At 1–19 the chain is on the extracellular side; it reads MDIDVLNMFLVAGGTLLVP. A helical; Signal-anchor for type II membrane protein membrane pass occupies residues 20–42; sequence LLAFMTSFLLWPAALIRIYYWYW. The Cytoplasmic portion of the chain corresponds to 43-337; the sequence is RRALGMQVKY…QSTDNHKKHD (295 aa). Residues 72–313 enclose the AB hydrolase-1 domain; the sequence is PSVLMLHGFS…CGHSVVMERP (242 aa). S148 acts as the Nucleophile in catalysis. Active-site charge relay system residues include D278 and H306.

The protein belongs to the AB hydrolase superfamily.

It localises to the late endosome membrane. Its subcellular location is the lysosome membrane. It is found in the mitochondrion membrane. The catalysed reaction is Hydrolyzes glycerol monoesters of long-chain fatty acids.. The enzyme catalyses 1-octanoylglycerol + H2O = octanoate + glycerol + H(+). It catalyses the reaction 1-decanoylglycerol + H2O = decanoate + glycerol + H(+). It carries out the reaction 1-dodecanoylglycerol + H2O = dodecanoate + glycerol + H(+). The catalysed reaction is 1-tetradecanoylglycerol + H2O = tetradecanoate + glycerol + H(+). The enzyme catalyses 2-hexadecanoylglycerol + H2O = glycerol + hexadecanoate + H(+). It catalyses the reaction 2-(9Z-octadecenoyl)-glycerol + H2O = glycerol + (9Z)-octadecenoate + H(+). It carries out the reaction 1-(9Z-octadecenoyl)-glycerol + H2O = glycerol + (9Z)-octadecenoate + H(+). The catalysed reaction is 2-(9Z,12Z-octadecadienoyl)-glycerol + H2O = (9Z,12Z)-octadecadienoate + glycerol + H(+). The enzyme catalyses 2-(5Z,8Z,11Z,14Z-eicosatetraenoyl)-glycerol + H2O = glycerol + (5Z,8Z,11Z,14Z)-eicosatetraenoate + H(+). It catalyses the reaction 1-(5Z,8Z,11Z,14Z-eicosatetraenoyl)-glycerol + H2O = glycerol + (5Z,8Z,11Z,14Z)-eicosatetraenoate + H(+). It carries out the reaction 1-(9Z,12Z-octadecadienoyl)-glycerol + H2O = (9Z,12Z)-octadecadienoate + glycerol + H(+). The catalysed reaction is 3-(9Z-octadecenoyl)-sn-glycero-1-phospho-(3'-(9Z-octadecenoyl)-1'-sn-glycerol) + H2O = 3-(9Z-octadecenoyl)-sn-glycero-1-phospho-(1'-sn-glycerol) + (9Z)-octadecenoate + H(+). The enzyme catalyses (S,S)-2-(9Z-octadecenoyl)-sn-glycero-1-phospho-(2'-(9Z-octadecenoyl)-1'-sn-glycerol) + H2O = (S,S)-2-(9Z-octadecenoyl)-sn-glycero-1-phospho-(1'-sn-glycerol) + (9Z)-octadecenoate + H(+). It catalyses the reaction (R,R)-2-(9Z-octadecenoyl)-sn-glycero-3-phospho-(2'-(9Z-octadecenoyl)-3'-sn-glycerol) + H2O = (R,R)-2-(9Z-octadecenoyl)-sn-glycero-3-phospho-(3'-sn-glycerol) + (9Z)-octadecenoate + H(+). In terms of biological role, lipase that preferentially hydrolysis medium-chain saturated monoacylglycerols including 2-arachidonoylglycerol. Through 2-arachidonoylglycerol degradation may regulate endocannabinoid signaling pathways. Also has a lysophosphatidyl lipase activity with a preference for lysophosphatidylglycerol among other lysophospholipids. Also able to degrade bis(monoacylglycero)phosphate (BMP) and constitutes the major enzyme for BMP catabolism. BMP, also known as lysobisphosphatidic acid, is enriched in late endosomes and lysosomes and plays a key role in the formation of intraluminal vesicles and in lipid sorting. The protein is Monoacylglycerol lipase abhd6-B (abhd6-b) of Xenopus laevis (African clawed frog).